The following is a 370-amino-acid chain: ADP-ribosylhydrolase ARH3 (370 aa).

Mg(2+) is bound at residue Glu47. Thr70 is subject to Phosphothreonine. 3 residues coordinate Mg(2+): Thr82, Asp83, and Asp84. Asp83 is a substrate binding site. Substrate is bound by residues 152–158, His188, Leu241, and Ile277; that span reads KGSYGNG. Mg(2+) is bound by residues Asp320, Asp322, and Thr323.

This sequence belongs to the ADP-ribosylglycohydrolase family. As to quaternary structure, monomer. Mg(2+) serves as cofactor. In terms of tissue distribution, ubiquitous.

The protein localises to the nucleus. The protein resides in the cytoplasm. Its subcellular location is the chromosome. It localises to the mitochondrion matrix. The enzyme catalyses [(1''-&gt;2')-ADP-alpha-D-ribose](n) + H2O = [(1''-&gt;2')-ADP-alpha-D-ribose](n-1) + ADP-D-ribose. It catalyses the reaction 1''-O-acetyl-ADP-alpha-D-ribose + H2O = ADP-D-ribose + acetate + H(+). It carries out the reaction O-(ADP-D-ribosyl)-L-seryl-[protein] + H2O = ADP-D-ribose + L-seryl-[protein]. The catalysed reaction is alpha-NAD(+) + H2O = ADP-D-ribose + nicotinamide + H(+). The protein undergoes a dramatic conformational switch from closed to open states upon substrate-binding, which enables specific substrate recognition for the 1''-O-linkage. The glutamate flap (Glu-47) blocks substrate entrance to Mg(2+) in the unliganded closed state. In presence of substrate, Glu-47 is ejected from the active site: this closed-to-open transition significantly widens the substrate-binding channel and precisely positions the scissile 1''-O-linkage for cleavage while securing tightly 2'- and 3'-hydroxyls of ADP-ribose. In terms of biological role, ADP-ribosylhydrolase that preferentially hydrolyzes the scissile alpha-O-linkage attached to the anomeric C1'' position of ADP-ribose and acts on different substrates, such as proteins ADP-ribosylated on serine and threonine, free poly(ADP-ribose) and O-acetyl-ADP-D-ribose. Specifically acts as a serine mono-ADP-ribosylhydrolase by mediating the removal of mono-ADP-ribose attached to serine residues on proteins, thereby playing a key role in DNA damage response. Serine ADP-ribosylation of proteins constitutes the primary form of ADP-ribosylation of proteins in response to DNA damage. Does not hydrolyze ADP-ribosyl-arginine, -cysteine, -diphthamide, or -asparagine bonds. Also able to degrade protein free poly(ADP-ribose), which is synthesized in response to DNA damage: free poly(ADP-ribose) acts as a potent cell death signal and its degradation by ADPRHL2 protects cells from poly(ADP-ribose)-dependent cell death, a process named parthanatos. Also hydrolyzes free poly(ADP-ribose) in mitochondria. Specifically digests O-acetyl-ADP-D-ribose, a product of deacetylation reactions catalyzed by sirtuins. Specifically degrades 1''-O-acetyl-ADP-D-ribose isomer, rather than 2''-O-acetyl-ADP-D-ribose or 3''-O-acetyl-ADP-D-ribose isomers. The chain is ADP-ribosylhydrolase ARH3 (Adprs) from Mus musculus (Mouse).